Consider the following 787-residue polypeptide: Patatin-like phospholipase domain-containing protein OOU_Y34scaffold00095g16.3 (787 aa).

Disordered stretches follow at residues 47 to 69 (APDTTQPPDDGLASPRSPSARSF) and 137 to 164 (KVVGSQTHRQKKSSRRRKRSKAVAPGRR). Residues 59–69 (ASPRSPSARSF) are compositionally biased toward low complexity. A compositionally biased stretch (basic residues) spans 144–157 (HRQKKSSRRRKRSK). Residues 180 to 200 (WPFLLIVGAWIVGLAVTYLFT) form a helical membrane-spanning segment. The PNPLA domain maps to 375-566 (LCLSGGASFA…RTDIPIRALN (192 aa)). Positions 406-410 (GTSGG) match the GXSXG motif. Serine 408 acts as the Nucleophile in catalysis. The active-site Proton acceptor is aspartate 553. The interval 745-787 (GTDEEITTNDEMEFASDEKAVLTEDEGQFDGVTDNTEGSPLLK) is disordered. Over residues 746–759 (TDEEITTNDEMEFA) the composition is skewed to acidic residues. Residues 777-787 (TDNTEGSPLLK) are compositionally biased toward polar residues.

This sequence belongs to the PLPL family.

The protein resides in the membrane. In terms of biological role, probable lipid hydrolase. The polypeptide is Patatin-like phospholipase domain-containing protein OOU_Y34scaffold00095g16.3 (Pyricularia oryzae (strain Y34) (Rice blast fungus)).